The sequence spans 995 residues: Polynucleotide 5'-hydroxyl-kinase NOL9 (995 aa).

Disordered regions lie at residues 18–173 and 271–359; these read EQRE…SSMK and IKVF…YEPP. Low complexity-rich tracts occupy residues 75–94 and 110–129; these read TAGA…SSPS and VNKS…KSAK. Residues 279–354 are compositionally biased toward acidic residues; the sequence is EETDSDEDDI…DIFDTDDLDS (76 aa). 639–646 contacts ATP; that stretch reads GGKGVGKS.

Belongs to the Clp1 family. NOL9/GRC3 subfamily.

It is found in the nucleus. It localises to the nucleolus. Its function is as follows. Polynucleotide 5'-kinase involved in rRNA processing. The sequence is that of Polynucleotide 5'-hydroxyl-kinase NOL9 from Drosophila melanogaster (Fruit fly).